The chain runs to 216 residues: GTP:AMP phosphotransferase, mitochondrial (216 aa).

GTP is bound at residue 15–20 (GSGKGT). The tract at residues 35-64 (STGDILRQNIIKNTELGKKAKQYIAEGKLV) is NMPbind. Residues Thr-36, Arg-41, 62–64 (KLV), 89–92 (GFPR), and Gln-96 each bind AMP. The tract at residues 125–162 (NRWIHAPSGRVYNIGFKNPKVPGKDDVTGEPLMQREDD) is LID. Residues Arg-126 and 135 to 136 (VY) contribute to the GTP site. Arg-159 and Arg-170 together coordinate AMP. Residue Thr-199 coordinates GTP.

It belongs to the adenylate kinase family. AK3 subfamily. As to quaternary structure, monomer. Ubiquitously expressed with highest levels expressed in the abdomen, suggesting a function in muscle tissues.

It localises to the mitochondrion matrix. The catalysed reaction is a ribonucleoside 5'-triphosphate + AMP = a ribonucleoside 5'-diphosphate + ADP. Its function is as follows. Involved in maintaining the homeostasis of cellular nucleotides by catalyzing the interconversion of nucleoside phosphates. Has GTP:AMP phosphotransferase and ITP:AMP phosphotransferase activities. This Drosophila melanogaster (Fruit fly) protein is GTP:AMP phosphotransferase, mitochondrial.